The following is a 166-amino-acid chain: Phosphodiesterase MJ0936 (166 aa).

Mn(2+) contacts are provided by aspartate 8, histidine 10, aspartate 36, asparagine 59, histidine 97, histidine 120, and histidine 122. Aspartate 8, histidine 10, aspartate 36, asparagine 59, histidine 97, histidine 120, and histidine 122 together coordinate Ni(2+).

This sequence belongs to the metallophosphoesterase superfamily. YfcE family. As to quaternary structure, monomer. Ni(2+) serves as cofactor. Mn(2+) is required as a cofactor.

Its activity is regulated as follows. Competitively inhibited by phosphate. Its function is as follows. Shows phosphodiesterase activity. Hydrolyzes phosphodiesters bonds in the artificial chromogenic substrates bis-p-nitrophenyl phosphate (bis-pNPP), and less efficiently thymidine 5'-monophosphate p-nitrophenyl ester (pNP-TMP) and p-nitrophenylphosphorylcholine (pNPPC). No catalytic activity was found toward cAMP or cGMP, nucleotides or phospholipase substrates such as phosphatidylcholine. The physiological substrate is unknown. This Methanocaldococcus jannaschii (strain ATCC 43067 / DSM 2661 / JAL-1 / JCM 10045 / NBRC 100440) (Methanococcus jannaschii) protein is Phosphodiesterase MJ0936.